The sequence spans 360 residues: Phenylalanine--tRNA ligase alpha subunit (360 aa).

A Mg(2+)-binding site is contributed by glutamate 260.

Belongs to the class-II aminoacyl-tRNA synthetase family. Phe-tRNA synthetase alpha subunit type 1 subfamily. As to quaternary structure, tetramer of two alpha and two beta subunits. Requires Mg(2+) as cofactor.

Its subcellular location is the cytoplasm. It carries out the reaction tRNA(Phe) + L-phenylalanine + ATP = L-phenylalanyl-tRNA(Phe) + AMP + diphosphate + H(+). The polypeptide is Phenylalanine--tRNA ligase alpha subunit (Sinorhizobium medicae (strain WSM419) (Ensifer medicae)).